A 348-amino-acid polypeptide reads, in one-letter code: MIKAGIVGGTGYTGVELLRLLAKHPQVEVSVITSRAEAGVKVADLFPNLRGHVDLAFTEPDVNILGQCDVVFFATPHGVAQNMMPVLMKTGTRIVDLSADFRIRDVPLWEKWYGQTHGAPDLVSQAVYGLPEVNRDAIRSAKLVACPGCYPTATQLGFLPLIENNLVDPSRLIANAASGASGAGRQAKIDNLLMEISDSFKAYGVKGHRHLPEIEQGLRDVQPAGVAAAQLTFVPHLLPIIRGIHATLYATLLDVNQVPDLQSLYQQRYANEPFVDVLPAGEMPQTRSVKGSNVCRISVFRPQARDTVVVLSVIDNLTKGASGQAIQNMNIMFGFDETAGLDVVALLP.

Residue C149 is part of the active site.

Belongs to the NAGSA dehydrogenase family. Type 1 subfamily.

It localises to the cytoplasm. The enzyme catalyses N-acetyl-L-glutamate 5-semialdehyde + phosphate + NADP(+) = N-acetyl-L-glutamyl 5-phosphate + NADPH + H(+). It functions in the pathway amino-acid biosynthesis; L-arginine biosynthesis; N(2)-acetyl-L-ornithine from L-glutamate: step 3/4. Its function is as follows. Catalyzes the NADPH-dependent reduction of N-acetyl-5-glutamyl phosphate to yield N-acetyl-L-glutamate 5-semialdehyde. In Cellvibrio japonicus (strain Ueda107) (Pseudomonas fluorescens subsp. cellulosa), this protein is N-acetyl-gamma-glutamyl-phosphate reductase.